A 636-amino-acid polypeptide reads, in one-letter code: Biosynthetic arginine decarboxylase (636 aa).

Lys101 carries the N6-(pyridoxal phosphate)lysine modification. 286–296 is a substrate binding site; sequence FDVGGGLAVDY.

It belongs to the Orn/Lys/Arg decarboxylase class-II family. SpeA subfamily. Mg(2+) serves as cofactor. Requires pyridoxal 5'-phosphate as cofactor.

It catalyses the reaction L-arginine + H(+) = agmatine + CO2. It participates in amine and polyamine biosynthesis; agmatine biosynthesis; agmatine from L-arginine: step 1/1. Its function is as follows. Catalyzes the biosynthesis of agmatine from arginine. This Shewanella amazonensis (strain ATCC BAA-1098 / SB2B) protein is Biosynthetic arginine decarboxylase.